The following is a 68-amino-acid chain: DNA-directed RNA polymerase subunit omega (68 aa).

This sequence belongs to the RNA polymerase subunit omega family. In terms of assembly, the RNAP catalytic core consists of 2 alpha, 1 beta, 1 beta' and 1 omega subunit. When a sigma factor is associated with the core the holoenzyme is formed, which can initiate transcription.

It carries out the reaction RNA(n) + a ribonucleoside 5'-triphosphate = RNA(n+1) + diphosphate. Functionally, promotes RNA polymerase assembly. Latches the N- and C-terminal regions of the beta' subunit thereby facilitating its interaction with the beta and alpha subunits. The chain is DNA-directed RNA polymerase subunit omega from Listeria monocytogenes serotype 4b (strain CLIP80459).